The sequence spans 294 residues: Chelated iron transport system membrane protein YfeC (294 aa).

Helical transmembrane passes span 17–37 (AIWVSAIVGAVCAFLSAYLML), 51–71 (VVPGVAGAYALGFPYAAGAFF), 93–113 (AIIGFIFSTFFAVGLLIVSLN), 140–160 (IIILVSFVILCLIWKDLLAVF), 169–189 (IGLSPLRLKILFFTLLSACTV), 194–214 (TVGAILVIAMVVTPGATAYLL), 221–241 (LLIIAIAIGAITSAFGAYLSF), and 246–266 (ATGGVIVTLQTLVFLPAFFFA).

Belongs to the ABC-3 integral membrane protein family.

It is found in the cell inner membrane. Its function is as follows. Part of an ATP-driven transport system YfeABC for chelated iron. The protein is Chelated iron transport system membrane protein YfeC (yfeC) of Yersinia pestis.